Reading from the N-terminus, the 309-residue chain is Cutinase (309 aa).

An N-terminal signal peptide occupies residues 1-47 (MSALTSQPTSSGSSEKIPRLRGWRAKAAGVVLAALALTTGVAAPAPA). Ser178 (nucleophile) is an active-site residue. Residues Asp224 and His256 each act as charge relay system in the active site. Cys289 and Cys305 form a disulfide bridge.

This sequence belongs to the AB hydrolase superfamily.

The protein localises to the secreted. It carries out the reaction a carboxylic ester + H2O = an alcohol + a carboxylate + H(+). The enzyme catalyses a triacylglycerol + H2O = a diacylglycerol + a fatty acid + H(+). The catalysed reaction is 1,2,3-tri-(9Z-octadecenoyl)-glycerol + H2O = di-(9Z)-octadecenoylglycerol + (9Z)-octadecenoate + H(+). It catalyses the reaction (6-hydroxyhexanoyl)(n) + H2O = (6-hydroxyhexanoyl)(n-1) + 6-hydroxyhexanoate + H(+). It carries out the reaction cutin + H2O = cutin monomers.. No effect on activity by SDS or chelating agents ethylenediaminetetraacetic acid (EDTA) or sodium citrate. No effect on activity by metal ions Ag(+), Ba(2+), Ca(2+), Co(2+), Cu(2+), Mn(2+), Ni(2+), Pb(2+) or Zn(2+). Activated by 1 mM digitonin and sodium deoxycholate, and reducing agents 1 mM 1,4-dithiothreitol, beta-mercaptoethanol and ascorbic acid. Activated by benzene, n-hexane, p-xylene and toluene. Activated by Fe(3+). Inhibited slightly by 1 mM of different chain length fatty acids, and only marginally by 6.0 M urea. Inhibited strongly with chemical modification by reagents phenyl methyl sulfonylfluorid (PMSF), 1-ethyl-3-(3-dimethylaminopropyl) carbodiimide (EDAC), diethylpyrocarbonate (DEPC) and N-bromosuccinimide (NBS). Inhibited by pyridine, DMSO, t-butanol and dodecane. Inhibited by Li(+), Hg(2+) and Mg(2+). No inhibition with chemical modification by reagents N-acetylimidazole (NAI), citraconic anhydride (CA), iodoacetate (IA) and phenylglyoxal (PG). In terms of biological role, catalyzes the hydrolysis of cutin, a polyester that forms the structure of plant cuticle. Shows esterase activity towards p-nitrophenol-linked aliphatic esters (pNP-aliphatic esters). Has a preference for medium chain length (C-4 to C-12) fatty acid esters. Active with p-nitrophenyl palmitate (p-NPP) as substrate. Hydrolyzes triacylglycerol substrates non-specifically with a preference for long, unsaturated fatty acyl chains with the highest activity for triolein. Substrates with cis-9 unsaturation are preferred over the saturated triacylglycerols. Hydrolyzes a wide range of natural oils, especially olive oil, with relatively high activity. Capable of catalyzing synthesis of the flavor ester isoamyl acetate by esterification of isoamyl alcohol using acetic acid as an acyl donor. Degrades synthetic aliphatic polyesters, namely poly(1,4-butylene succinate) extended with 1,6-diisocyanatohexane (PBSc-D) and poly(epsilon-caprolactone) (PCL) plastics. Does not degrade poly(lactic acid) (PLA) nor aromatic poly(ethylene terephthalate) (PET), the most abundant polyester plastic in the world. This chain is Cutinase, found in Amycolatopsis mediterranei (strain S699) (Nocardia mediterranei).